A 354-amino-acid polypeptide reads, in one-letter code: Thiamine thiazole synthase 2, chloroplastic (354 aa).

The N-terminal 44 residues, 1–44, are a transit peptide targeting the chloroplast; the sequence is MATTAASSLLKSSFAGSRLPSATRTTTPSSVAVATPRAGGGPIR. Residues 17-49 form a disordered region; sequence SRLPSATRTTTPSSVAVATPRAGGGPIRASISS. The span at 20–32 shows a compositional bias: polar residues; sequence PSATRTTTPSSVA. Residues Ala-97, 117–118, Gly-125, and Val-190 contribute to the substrate site; that span reads EQ. 2,3-didehydroalanine (Cys) is present on Cys-219. Substrate is bound by residues Asp-221, His-236, Met-288, and 298–300; that span reads RMG.

Belongs to the THI4 family. In terms of assembly, homooctamer. Fe cation is required as a cofactor. During the catalytic reaction, a sulfide is transferred from Cys-219 to a reaction intermediate, generating a dehydroalanine residue. In terms of tissue distribution, highest expression in developing embryos and green leaves and a very low level expression seen in endosperm, roots, etiolated shoots and immature ears.

It localises to the plastid. The protein localises to the chloroplast. The catalysed reaction is [ADP-thiazole synthase]-L-cysteine + glycine + NAD(+) = [ADP-thiazole synthase]-dehydroalanine + ADP-5-ethyl-4-methylthiazole-2-carboxylate + nicotinamide + 3 H2O + 2 H(+). Functionally, involved in biosynthesis of the thiamine precursor thiazole. Catalyzes the conversion of NAD and glycine to adenosine diphosphate 5-(2-hydroxyethyl)-4-methylthiazole-2-carboxylic acid (ADT), an adenylated thiazole intermediate. The reaction includes an iron-dependent sulfide transfer from a conserved cysteine residue of the protein to a thiazole intermediate. The enzyme can only undergo a single turnover, which suggests it is a suicide enzyme. May have additional roles in adaptation to various stress conditions and in DNA damage tolerance. The chain is Thiamine thiazole synthase 2, chloroplastic from Zea mays (Maize).